Reading from the N-terminus, the 311-residue chain is MQDLAGKKIIIKSPAKINLHLEVIGKREDGFHELAMIMQNIDLFDYLEFQINNEGLIKLESDCTDLSLSSDNLIVKSANLLRKKLNIDCGANIFLRKNIPIGAGLAGGSSNAAATLIGLNKLWDLNVDQKTLFSLASTLGSDIPFFINGGIQLCFGRGEILEKLDSNFDYGVILLKNPNVSVSTAETYSKYSNRFCYQYLTNGEMIENIRNNLRDNGLNNLNFDKQHLTIKNDLQLVVENDNDSVKEALYLLSKLENCLTFSMSGSGPTCFAIFKDIETAKKELNANSKLFEDKGYDAWVCTFFEKGITFI.

Lysine 16 is a catalytic residue. 100-110 (PIGAGLAGGSS) contacts ATP. The active site involves aspartate 142.

Belongs to the GHMP kinase family. IspE subfamily.

It catalyses the reaction 4-CDP-2-C-methyl-D-erythritol + ATP = 4-CDP-2-C-methyl-D-erythritol 2-phosphate + ADP + H(+). Its pathway is isoprenoid biosynthesis; isopentenyl diphosphate biosynthesis via DXP pathway; isopentenyl diphosphate from 1-deoxy-D-xylulose 5-phosphate: step 3/6. Functionally, catalyzes the phosphorylation of the position 2 hydroxy group of 4-diphosphocytidyl-2C-methyl-D-erythritol. This Prochlorococcus marinus (strain MIT 9215) protein is 4-diphosphocytidyl-2-C-methyl-D-erythritol kinase.